We begin with the raw amino-acid sequence, 683 residues long: Leishmanolysin-like peptidase (683 aa).

His-257 provides a ligand contact to Zn(2+). The active site involves Glu-258. Zn(2+) is bound by residues His-261 and His-364.

It belongs to the peptidase M8 family. Zn(2+) is required as a cofactor.

It is found in the cytoplasm. Essential for the coordination of mitotic progression, and also plays a role in cell migration. In Drosophila melanogaster (Fruit fly), this protein is Leishmanolysin-like peptidase (Invadolysin).